Here is a 722-residue protein sequence, read N- to C-terminus: Pesticidal crystal protein Cry22Aa (722 aa).

Promotes colloidosmotic lysis by binding to the midgut epithelial cells of hymenopteran species. This chain is Pesticidal crystal protein Cry22Aa (cry22Aa), found in Bacillus thuringiensis.